Reading from the N-terminus, the 297-residue chain is Formylmethanofuran--tetrahydromethanopterin formyltransferase-like protein (297 aa).

Belongs to the FTR family.

The sequence is that of Formylmethanofuran--tetrahydromethanopterin formyltransferase-like protein (ehaS) from Methanothermobacter thermautotrophicus (strain ATCC 29096 / DSM 1053 / JCM 10044 / NBRC 100330 / Delta H) (Methanobacterium thermoautotrophicum).